Consider the following 348-residue polypeptide: Abnormal cell lineage protein 44 (348 aa).

Positions 1 to 25 (MRAAPFDFFFQSTALSTFFILCSLA) are cleaved as a signal peptide. Intrachain disulfides connect Cys-91–Cys-102, Cys-141–Cys-149, Cys-151–Cys-165, Cys-213–Cys-227, Cys-215–Cys-222, Cys-272–Cys-299, Cys-282–Cys-294, Cys-298–Cys-338, Cys-314–Cys-329, Cys-316–Cys-326, and Cys-321–Cys-322. Residue Ser-219 is the site of O-palmitoleoyl serine; by mom-1 attachment. Asn-286 carries N-linked (GlcNAc...) asparagine glycosylation.

This sequence belongs to the Wnt family. Palmitoleoylation is required for efficient binding to frizzled receptors. Depalmitoleoylation leads to Wnt signaling pathway inhibition. In terms of tissue distribution, expressed in the tail hypodermis.

Its subcellular location is the secreted. The protein resides in the extracellular space. It is found in the extracellular matrix. Functionally, ligand for members of the frizzled family of seven transmembrane receptors. Affects male tail development, vulval precursor cell specification and egg laying. Involved in morphogenesis by influencing polarity of asymmetric cell divisions of the B, U, and F cells in the male, and the T cell in males and hermaphrodites. Controls spindle orientation in B-gamma cell division during male copulatory spicule development. Involved in specification of the P7.p lineage during vulval development. Has a role in providing polarity and default lin-17 localization in axon development and positioning of neuromuscular synapses in DA9 regions by negatively regulating synaptogenesis. Plays a role in motorneuron development by promoting the extension of the anterior neurite of ventral D-type GABAergic motorneurons along the anterior-posterior axis of the ventral nerve cord. Positively regulates cilium position and dendrite morphogenesis in postembryonic PQR gas-sensing neurons. This is likely through regulating the localization of grdn-1 to the distal dendrites of PQR sensory neurons. The protein is Abnormal cell lineage protein 44 of Caenorhabditis elegans.